A 67-amino-acid chain; its full sequence is MDIADIESRSSQELHEILVNLRKEFVNLVFQKKLAQCNNISRFSLIRKSIARILTTLNKRRREEKNA.

The protein belongs to the universal ribosomal protein uL29 family.

The protein is Large ribosomal subunit protein uL29 of Wolbachia pipientis wMel.